The sequence spans 112 residues: Ig kappa chain V-III region PC 7132 (112 aa).

Residues 1–23 form a framework-1 region; sequence DIVLTQSPASLAVSLGQRATISC. C23 and C92 are oxidised to a cystine. Residues 24–38 form a complementarity-determining-1 region; that stretch reads RASESVDNYGISFMN. Positions 39–53 are framework-2; the sequence is WFQQKPGQPPKLLIY. A complementarity-determining-2 region spans residues 54–60; the sequence is AASNQGS. A framework-3 region spans residues 61 to 92; that stretch reads GVPARFSGSGSGTDFSLNIHPMEEDDTAMYFC. Residues 93–102 form a complementarity-determining-3 region; the sequence is QQSKEVPPYT. The segment at 103-112 is framework-4; it reads FGGGTKLEIK.

This is Ig kappa chain V-III region PC 7132 from Mus musculus (Mouse).